The primary structure comprises 853 residues: DNA mismatch repair protein MutS (853 aa).

ATP is bound at residue 614-621; that stretch reads GPNMGGKS.

It belongs to the DNA mismatch repair MutS family.

Its function is as follows. This protein is involved in the repair of mismatches in DNA. It is possible that it carries out the mismatch recognition step. This protein has a weak ATPase activity. The protein is DNA mismatch repair protein MutS of Escherichia coli (strain K12 / MC4100 / BW2952).